A 252-amino-acid polypeptide reads, in one-letter code: MKKVLWIIIIILMVGALAGCGANGQPITAETEGIWNHFFVYPLSWVLISVADLLNGSFGLSIIVVTIGIRLFLLPLMIKQQKSSRAMQALRPEMEALQKKYGQGTKRDPKDQQKMQKELMALYKDSGVNPMAGCLPLFIQLPVMMAFYFAIMRTEVIALHSFLWFDLGSPDPLYILPVVAGITTFLQVKMTSFQLNDQMKVIIYIMPVMIVVAGVTLPSALSLYWVVGNLFMIIQTYFTVVRFEQLKTDISK.

A signal peptide spans Met-1–Gly-19. Cys-20 is lipidated: N-palmitoyl cysteine. Cys-20 carries the S-diacylglycerol cysteine lipid modification. 6 helical membrane-spanning segments follow: residues Ile-34 to Leu-54, Phe-58 to Ile-78, Met-131 to Ile-151, Phe-162 to Ile-182, Val-201 to Leu-221, and Leu-223 to Phe-243.

It belongs to the OXA1/ALB3/YidC family. Type 2 subfamily.

Its subcellular location is the cell membrane. In terms of biological role, required for the insertion and/or proper folding and/or complex formation of integral membrane proteins into the membrane. Involved in integration of membrane proteins that insert both dependently and independently of the Sec translocase complex, as well as at least some lipoproteins. The sequence is that of Membrane protein insertase YidC from Alkalihalophilus pseudofirmus (strain ATCC BAA-2126 / JCM 17055 / OF4) (Bacillus pseudofirmus).